The following is a 118-amino-acid chain: Small ribosomal subunit protein uS13 (118 aa).

The tract at residues 99–118 is disordered; the sequence is GQRTRTNARTRKGPRKAIKK.

It belongs to the universal ribosomal protein uS13 family. Part of the 30S ribosomal subunit. Forms a loose heterodimer with protein S19. Forms two bridges to the 50S subunit in the 70S ribosome.

Functionally, located at the top of the head of the 30S subunit, it contacts several helices of the 16S rRNA. In the 70S ribosome it contacts the 23S rRNA (bridge B1a) and protein L5 of the 50S subunit (bridge B1b), connecting the 2 subunits; these bridges are implicated in subunit movement. Contacts the tRNAs in the A and P-sites. The sequence is that of Small ribosomal subunit protein uS13 from Xylella fastidiosa (strain M23).